Consider the following 183-residue polypeptide: Adenine phosphoribosyltransferase (183 aa).

The protein belongs to the purine/pyrimidine phosphoribosyltransferase family. Homodimer.

It is found in the cytoplasm. The enzyme catalyses AMP + diphosphate = 5-phospho-alpha-D-ribose 1-diphosphate + adenine. Its pathway is purine metabolism; AMP biosynthesis via salvage pathway; AMP from adenine: step 1/1. In terms of biological role, catalyzes a salvage reaction resulting in the formation of AMP, that is energically less costly than de novo synthesis. The protein is Adenine phosphoribosyltransferase of Erwinia tasmaniensis (strain DSM 17950 / CFBP 7177 / CIP 109463 / NCPPB 4357 / Et1/99).